The primary structure comprises 2181 residues: MRVNTPSLLICGPMISQADAAYLPQVRSNLVHNKNLSYLREAVSELPNLWLRLVREEPSLGEIDVALFLDNLSQWVKGNSTQPTASRDSRNTQWAVLTVLVQIVEYMEYLDNFSSRDEDGCGHLDAHAALLDHLHEGGIQGLCIGLLTALALACAPSHTEIAKYGAVAVRLALCCGAYIDLNEAKSPAKTICVTTRWPGDDGDDKGDIDRKCDEQLQAILDKYPDAYKSVQTDVSTATITSNEGNVLALLTELEKDGAISKRIDLHGRYHYGGNQAALDKLLQLSSALPMLQFPRRSRLVVPVRNNCNGNIVEDNTALHEMALRCILVENAEWFKTISSSISANTRQAQLLVLGPVNCVPRSLLLRSPQPISLSVSGKADNIYPDQSIAIIGSSCCFPGAENPRQLWEFIRTKQTRGVVDAAGSFDCSFFRKSPREAEYMDPQQRLGLHLAQEALESGGYFSPSSSATKNVGCYLGISSCDYEDNVNSHPPTAYSFTGTARAFASGRISHFFGLTGPSMVIDTACSSSGVAINTACRAIQSGECTMALAGGINLISREARTQENLAAASFLSPTGQCRPFDSKANGYRRGEGGGLVLLKKLSSAVADGDVVLGVIAATAVNQSEGNKSITLPSSESQTSLYRRVLESANMKPRHISYVEAHGTGTQKGDPIECQSIRTVFGGTLRPACRQLHVGSIKSNIGHSEAASGIAALLKVLQMLHHRVIPPQANFEELNPAISPLHDDNIEISRQTKPWEERFRAALVNNYGASGTNAAMLVCQPPSIQHSLPLFPNRPCHYPILLTSHSNESLQLYCRNILRFIENQNNVDSDEEVLANTAFHLAQRQDHSLSFRLTFSVSSIEELKSKLQQQSTSQSYKDGPIQKHSGQPVVVVLAGQTGRRVRLSHEIYASSELLQRHLGRCDRALQTMGFTSLFPGIFDTEPVEDLVQAHCMLFSLQYSVAMSWVDSGLKIDALVGHSLGQLTALCISGMLSLQDGLKLISGRASLIQSKWGAECGAMLSVDADAETVQNLADSLPAGYKVEIACYNSSQSHVVVGTKAAITAFEKAADLRGVSLRRLAISHGFHSEMIDGILPDYNKLVQGLVLHPPAIAIEPCSQSGHSWANATPEIIARQSREPVYFANAISRLEKRFGSCIWLEAGWGSAGVNMARRALTHGPTRSLSTHSFYPAALGEPDSVKALADTTINLWNAGIRVQFWLYHRSQTGSPAPLELPLHPFMKSEYLLPVVKHSKKAQNEKVGQPVIQEKATLVSLIGKTQNAGVQTVEYSINQNSEEYSVYVRGRTVFEHFLAPVSMYIESATRAFRLLSTHKLVSFSTSASMELKNLKLHAPFGFDLQKSLRMILRKLGEDAWEFRVESHPIHEKERGSILQATGVITLQEVYSHLAPHRPVLRRLYDRCEELGKDVSASVVQGDFIKKIINSVARYDDRYIGVRSITSKGFETVAHVFEPEIASQFNPTSPFNPLLLDNFLLIAEIQANNLGGVTPDEIYVGNGFDAATAYTNAEDSEPSTKGHWVGLYSFDHQENDGILCDIFIFCAERKILSMTILGAKFQKIAISSLKRALKTINGVPQTSGGRTPSSSITEFISGDDASPCPPIPGADKPIFIREDDFGSMTTSGHMDEENHLIPEYDVISGSSRSTSSSPPSLESRSQAMETEEITEGAGSALFNLLSNHLNYPKGLSPDTPLGALGLDSLVAIQLQSDIEQMFGKNSQLMDINESSTFSTLFHTIFPQQQTDQFGFVPLHDQTGKDRLESAVPLRLGYSHIKHAAPSFNDSLDRSNTLFIRQVPHAMDALKQNISSTIKAAGFHDFFSDVHPRQRSLVLAYIVQAFRELGCDIRSLRVGDELPSVQFKPKYQNLMNRLFDILGSEGVINVLNKRYLGGLASFPERSAEDMHKAILNDYPSYHPDHKLLHTTGARLADCISGKVDPLQILFQNAASIKLLEDVYVKSPMFGTGNLLLGEFMNCLFSYNKTPDRLNHIRILEIGAGTGATTQLVVDRLLACNVDFTYTFTDVSAALVASAREKLTTRYGQHQRFDMEFETLNIEKEPPASFAQSYDLVISANCIHATRDLRKSCSNIEKLLRKDGGMLCLLELTRPLEWLDCVFGLLDGWWRFDDHRTYALAGEQDWKTILLQSGFDHIDWTDDGSREAQQLRLITAWR.

Residues 74–180 form an N-terminal acylcarrier protein transacylase domain (SAT) region; sequence QWVKGNSTQP…LALCCGAYID (107 aa). The Ketosynthase family 3 (KS3) domain occupies 347–779; sequence QAQLLVLGPV…GTNAAMLVCQ (433 aa). Residues Cys-525, His-661, and His-702 each act as for beta-ketoacyl synthase activity in the active site. The malonyl-CoA:ACP transacylase (MAT) domain stretch occupies residues 891–1193; it reads VLAGQTGRRV…SFYPAALGEP (303 aa). Ser-977 functions as the For acyl/malonyl transferase activity in the catalytic mechanism. Residues 1269 to 1401 form an N-terminal hotdog fold region; the sequence is VSLIGKTQNA…GVITLQEVYS (133 aa). The PKS/mFAS DH domain maps to 1269 to 1579; it reads VSLIGKTQNA…FQKIAISSLK (311 aa). The tract at residues 1276 to 1573 is product template (PT) domain; that stretch reads QNAGVQTVEY…TILGAKFQKI (298 aa). A C-terminal hotdog fold region spans residues 1425 to 1579; the sequence is SASVVQGDFI…FQKIAISSLK (155 aa). The span at 1587-1603 shows a compositional bias: polar residues; sequence GVPQTSGGRTPSSSITE. Disordered stretches follow at residues 1587–1618 and 1652–1675; these read GVPQ…PIPG and ISGS…AMET. The segment covering 1653 to 1670 has biased composition (low complexity); that stretch reads SGSSRSTSSSPPSLESRS. The Carrier domain maps to 1677–1753; the sequence is EITEGAGSAL…TLFHTIFPQQ (77 aa). Residue Ser-1713 is modified to O-(pantetheine 4'-phosphoryl)serine. A methyltransferase (CMeT) domain region spans residues 1982 to 2164; that stretch reads EFMNCLFSYN…QSGFDHIDWT (183 aa).

Its pathway is secondary metabolite biosynthesis; terpenoid biosynthesis. Non-reducing polyketide synthase; part of the gene cluster that mediates the biosynthesis of the diterpenoid pyrones subglutinols A and B. The first step of the pathway is the synthesis of the alpha-pyrone moiety by the polyketide synthase dpmaA via condensation of one acetyl-CoA starter unit with 3 malonyl-CoA units and 2 methylations. The alpha-pyrone is then combined with geranylgeranyl pyrophosphate (GGPP) formed by the GGPP synthase dpmaD through the action of the prenyltransferase dpmaC to yield a linear alpha-pyrone diterpenoid. Subsequent steps in the diterpenoid pyrone biosynthetic pathway involve the decalin core formation, which is initiated by the epoxidation of the C10-C11 olefin by the FAD-dependent oxidoreductase dpmaE, and is followed by a cyclization cascade catalyzed by the terpene cyclase dpmaB. The dehydrogenase dpmaF is then involved in tetrahydrofuran (THF) ring formation at the C5 unit to complete the formation of subglutinols A and B. The protein is Non-reducing polyketide synthase dpmaA of Metarhizium anisopliae (Entomophthora anisopliae).